Here is a 463-residue protein sequence, read N- to C-terminus: Serine/threonine-protein kinase tricornered (463 aa).

One can recognise a Protein kinase domain in the interval Phe93–Phe394. Residues Ile99–Val107 and Lys122 each bind ATP. The interval Tyr119–Thr180 is interaction with mats and Mob1. The active-site Proton acceptor is Asp216. Ser292 carries the post-translational modification Phosphoserine. One can recognise an AGC-kinase C-terminal domain in the interval Arg395–Glu463. Position 453 is a phosphothreonine (Thr453).

The protein belongs to the protein kinase superfamily. AGC Ser/Thr protein kinase family. In terms of assembly, interacts with, and is activated by, Mob1. Mg(2+) serves as cofactor. Expressed in the peripheral and central nervous system (at protein level). Expressed in the wing imaginal disk.

It is found in the cytoplasm. Its subcellular location is the nucleus. It carries out the reaction L-seryl-[protein] + ATP = O-phospho-L-seryl-[protein] + ADP + H(+). The enzyme catalyses L-threonyl-[protein] + ATP = O-phospho-L-threonyl-[protein] + ADP + H(+). Activated by fry. In terms of biological role, serine/threonine-protein kinase involved in controlling cell structure and proliferation of a variety of polarized outgrowths including epidermal hairs, bristles, arista laterals, and dendrites. Together with fry, maintains the integrity of epidermal hairs and is an essential component of the signaling pathway regulating dendritic branching of sensory neurons. Reduces neurite outgrowth by phosphorylating pav, thereby inhibiting its function in microtubule-microtubule sliding. This Drosophila melanogaster (Fruit fly) protein is Serine/threonine-protein kinase tricornered.